The following is a 341-amino-acid chain: Putative gustatory receptor 9a (341 aa).

Residue Met1 is a topological domain, cytoplasmic. The helical transmembrane segment at 2-22 (SLWLEHFLTGYFQLCGLVCGW) threads the bilayer. Over 23–30 (SGSRLGRL) the chain is Extracellular. The chain crosses the membrane as a helical span at residues 31-51 (LSSTFLVLILIELVGEIETYF). Over 52–68 (TEENPDNESVPAYFAKV) the chain is Cytoplasmic. The chain crosses the membrane as a helical span at residues 69-89 (IMGVNMAYKMIHAWIALSALF). Topologically, residues 90–113 (ECRRFRYLLEELPPVKATSFIYRH) are extracellular. A helical transmembrane segment spans residues 114–134 (LILEIILFACNAFLVLSEYTI). Topologically, residues 135–202 (RGIYLENLRY…LAKVTRSLSH (68 aa)) are cytoplasmic. The helical transmembrane segment at 203 to 223 (LFGLSLLLLNVLCLGDWIIVC) threads the bilayer. Residues 224–233 (NVYFMVAYLQ) lie on the Extracellular side of the membrane. A helical transmembrane segment spans residues 234-254 (VLPATLFLFGQVMFVVCPTLI). The Cytoplasmic portion of the chain corresponds to 255–318 (KIWSICAASH…GIYHLNLQTL (64 aa)). Residues 319–339 (AGMFFFILEALVIFLQFVSLV) traverse the membrane as a helical segment. Residues 340-341 (RT) are Extracellular-facing.

Belongs to the insect chemoreceptor superfamily. Gustatory receptor (GR) family. Gr2a subfamily. In terms of tissue distribution, expressed in neurons of the terminal external chemosensory organ of larvae.

The protein localises to the cell membrane. Functionally, probable gustatory receptor which mediates acceptance or avoidance behavior, depending on its substrates. The polypeptide is Putative gustatory receptor 9a (Gr9a) (Drosophila melanogaster (Fruit fly)).